The following is a 736-amino-acid chain: Dimethylamine dehydrogenase (736 aa).

An S-6-FMN cysteine modification is found at Cys-31. Substrate is bound at residue 176–179; it reads YGAH. Catalysis depends on Tyr-181, which acts as the Proton donor. Residues Arg-229 and Arg-329 each coordinate FMN. [4Fe-4S] cluster is bound by residues Cys-352, Cys-355, Cys-358, and Cys-371. 398-427 provides a ligand contact to ADP; it reads DVLIVGAGPAGSECARVLMERGYTVHLVDT.

The protein in the N-terminal section; belongs to the NADH:flavin oxidoreductase/NADH oxidase family. Requires FMN as cofactor. [4Fe-4S] cluster serves as cofactor.

The enzyme catalyses dimethylamine + oxidized [electron-transfer flavoprotein] + H2O + H(+) = methylamine + reduced [electron-transfer flavoprotein] + formaldehyde. The sequence is that of Dimethylamine dehydrogenase (dmd) from Hyphomicrobium sp. (strain x).